The primary structure comprises 160 residues: 2-C-methyl-D-erythritol 2,4-cyclodiphosphate synthase (160 aa).

Positions 10 and 12 each coordinate a divalent metal cation. 4-CDP-2-C-methyl-D-erythritol 2-phosphate-binding positions include 10 to 12 (DVH) and 36 to 37 (HS). Residue His44 coordinates a divalent metal cation. 4-CDP-2-C-methyl-D-erythritol 2-phosphate-binding positions include 58 to 60 (DIG), 134 to 137 (TTTE), Phe141, and Arg144.

It belongs to the IspF family. Homotrimer. It depends on a divalent metal cation as a cofactor.

The enzyme catalyses 4-CDP-2-C-methyl-D-erythritol 2-phosphate = 2-C-methyl-D-erythritol 2,4-cyclic diphosphate + CMP. Its pathway is isoprenoid biosynthesis; isopentenyl diphosphate biosynthesis via DXP pathway; isopentenyl diphosphate from 1-deoxy-D-xylulose 5-phosphate: step 4/6. Its function is as follows. Involved in the biosynthesis of isopentenyl diphosphate (IPP) and dimethylallyl diphosphate (DMAPP), two major building blocks of isoprenoid compounds. Catalyzes the conversion of 4-diphosphocytidyl-2-C-methyl-D-erythritol 2-phosphate (CDP-ME2P) to 2-C-methyl-D-erythritol 2,4-cyclodiphosphate (ME-CPP) with a corresponding release of cytidine 5-monophosphate (CMP). In Phocaeicola vulgatus (strain ATCC 8482 / DSM 1447 / JCM 5826 / CCUG 4940 / NBRC 14291 / NCTC 11154) (Bacteroides vulgatus), this protein is 2-C-methyl-D-erythritol 2,4-cyclodiphosphate synthase.